Consider the following 443-residue polypeptide: Oxygen-dependent coproporphyrinogen-III oxidase, mitochondrial (443 aa).

Residues 1-98 (MALRLGQLGS…EMVPKSSGAR (98 aa)) constitute a mitochondrion transit peptide. Residues 90 to 111 (MVPKSSGARSPSPGRLEEDGDE) are disordered. Ser101 carries the phosphoserine modification. The interval 182-191 (VLQDGRVFEK) is important for dimerization. Ser233 is a coproporphyrinogen III binding site. Catalysis depends on His247, which acts as the Proton donor. Position 249 to 251 (249 to 251 (NYR)) interacts with coproporphyrinogen III. The segment at 381–417 (YVEFNLVYDRGTKFGLFTPGSRIESILMSLPLTARWE) is important for dimerization. Lys393 carries the post-translational modification N6-acetyllysine; alternate. Lys393 bears the N6-succinyllysine; alternate mark. A coproporphyrinogen III-binding site is contributed by 400-402 (GSR).

Belongs to the aerobic coproporphyrinogen-III oxidase family. In terms of assembly, homodimer.

Its subcellular location is the mitochondrion intermembrane space. The catalysed reaction is coproporphyrinogen III + O2 + 2 H(+) = protoporphyrinogen IX + 2 CO2 + 2 H2O. It participates in porphyrin-containing compound metabolism; protoporphyrin-IX biosynthesis; protoporphyrinogen-IX from coproporphyrinogen-III (O2 route): step 1/1. Its function is as follows. Involved in the heme biosynthesis. Catalyzes the aerobic oxidative decarboxylation of propionate groups of rings A and B of coproporphyrinogen-III to yield the vinyl groups in protoporphyrinogen-IX. The polypeptide is Oxygen-dependent coproporphyrinogen-III oxidase, mitochondrial (Rattus norvegicus (Rat)).